A 491-amino-acid polypeptide reads, in one-letter code: MDTAPDHREPQEQGESRKWYEMTASEFYVYVVAFMCGVSMMMPVNAVFSAPAYIMTYYRYAMQDPEAVPLYTNFWNNVMTYYNLIGIVTSLIMEPLTLLSWFRRIPMKVRLLGGLVILIVEIIVLMVVPARGTSEAGAVATICCTGFIGGFGKSIFESTTYGMFGAFPSSFTSTMMGGVGMSGVLTSLLQIIVKAALPDSYEGVKKQSKIYYGLDVGIQGMTFVALILLRFNSFAQNYFGDLGAVKSKVDAGKLSAEALCHTDEHPTHDKEGRNSSSGKEVPALGEVQTAAAKSEGPDAVEESSWPHEVEGPTSNEILVATAIFSTLRRVKWMFVACAFNFLITLFLFPGIAVGMFPDSKWFSTIAVFIFNVFDVLGRFSPSLKLMWPRSYKQRWIIVAASFARVIFVPLLLLHSYHYIPGEAYGYVMEVIFGFSNGYVGSMALVLGPQSKGIDNDGKRFVAGTLMGISILVGGTIGTVLSIMTQTIRATY.

The next 6 helical transmembrane spans lie at 27–47, 82–102, 109–129, 136–156, 173–193, and 209–229; these read FYVY…VNAV, YNLI…LSWF, VRLL…MVVP, AGAV…KSIF, STMM…QIIV, and KIYY…LILL. Basic and acidic residues predominate over residues 260-273; it reads CHTDEHPTHDKEGR. Disordered stretches follow at residues 260–280 and 290–309; these read CHTD…SGKE and AAAK…PHEV. The N-linked (GlcNAc...) asparagine glycan is linked to N274. 5 consecutive transmembrane segments (helical) span residues 333–353, 361–381, 395–415, 427–447, and 460–480; these read MFVA…GIAV, WFST…RFSP, WIIV…LLHS, VMEV…LVLG, and FVAG…GTVL.

Belongs to the SLC29A/ENT transporter (TC 2.A.57) family.

It localises to the membrane. It catalyses the reaction adenosine(in) + H(+)(in) = adenosine(out) + H(+)(out). The catalysed reaction is uridine(in) + H(+)(in) = uridine(out) + H(+)(out). Its function is as follows. Sodium-independent high affinity nucleoside:H(+) symporter; transports adenosine and uridine. Can transport cytidine and thymidine. The polypeptide is Nucleoside transporter 1.1 (Leishmania donovani).